Reading from the N-terminus, the 147-residue chain is Large ribosomal subunit protein bL9 (147 aa).

Belongs to the bacterial ribosomal protein bL9 family.

Binds to the 23S rRNA. In Caldanaerobacter subterraneus subsp. tengcongensis (strain DSM 15242 / JCM 11007 / NBRC 100824 / MB4) (Thermoanaerobacter tengcongensis), this protein is Large ribosomal subunit protein bL9.